Consider the following 288-residue polypeptide: Shikimate dehydrogenase (NADP(+)) (288 aa).

Shikimate is bound by residues 22-24 and T69; that span reads SLS. Catalysis depends on K73, which acts as the Proton acceptor. Residues N94 and D110 each coordinate shikimate. NADP(+) is bound by residues 131–135 and L228; that span reads GSGGA. Residue Y230 coordinates shikimate. Position 251 (G251) interacts with NADP(+).

This sequence belongs to the shikimate dehydrogenase family. As to quaternary structure, homodimer.

The enzyme catalyses shikimate + NADP(+) = 3-dehydroshikimate + NADPH + H(+). It functions in the pathway metabolic intermediate biosynthesis; chorismate biosynthesis; chorismate from D-erythrose 4-phosphate and phosphoenolpyruvate: step 4/7. Involved in the biosynthesis of the chorismate, which leads to the biosynthesis of aromatic amino acids. Catalyzes the reversible NADPH linked reduction of 3-dehydroshikimate (DHSA) to yield shikimate (SA). The sequence is that of Shikimate dehydrogenase (NADP(+)) from Synechococcus sp. (strain JA-2-3B'a(2-13)) (Cyanobacteria bacterium Yellowstone B-Prime).